The chain runs to 476 residues: Replication factor C large subunit (476 aa).

50 to 57 (GPPGVGKT) is a binding site for ATP. Residues 447–476 (YEKGTKKGKGEKRRKGSDEGSGLLKWLKKD) form a disordered region. The span at 452-461 (KKGKGEKRRK) shows a compositional bias: basic residues.

Belongs to the activator 1 small subunits family. RfcL subfamily. As to quaternary structure, heteromultimer composed of small subunits (RfcS) and large subunits (RfcL).

Part of the RFC clamp loader complex which loads the PCNA sliding clamp onto DNA. This is Replication factor C large subunit from Ignicoccus hospitalis (strain KIN4/I / DSM 18386 / JCM 14125).